Consider the following 465-residue polypeptide: ATP synthase subunit beta (465 aa).

Position 152–159 (152–159) interacts with ATP; that stretch reads GGAGVGKT.

Belongs to the ATPase alpha/beta chains family. In terms of assembly, F-type ATPases have 2 components, CF(1) - the catalytic core - and CF(0) - the membrane proton channel. CF(1) has five subunits: alpha(3), beta(3), gamma(1), delta(1), epsilon(1). CF(0) has three main subunits: a(1), b(2) and c(9-12). The alpha and beta chains form an alternating ring which encloses part of the gamma chain. CF(1) is attached to CF(0) by a central stalk formed by the gamma and epsilon chains, while a peripheral stalk is formed by the delta and b chains.

The protein resides in the cell inner membrane. It carries out the reaction ATP + H2O + 4 H(+)(in) = ADP + phosphate + 5 H(+)(out). Functionally, produces ATP from ADP in the presence of a proton gradient across the membrane. The catalytic sites are hosted primarily by the beta subunits. The sequence is that of ATP synthase subunit beta from Campylobacter curvus (strain 525.92).